A 443-amino-acid polypeptide reads, in one-letter code: Zinc finger protein 713 (443 aa).

A compositionally biased stretch (polar residues) spans 1 to 10 (MPSQNAVFSQ). 2 disordered regions span residues 1 to 23 (MPSQNAVFSQEGNMEEEEMNDGS) and 99 to 118 (DTHPDGENRPEIKKSTTSQN). The 71-residue stretch at 32–102 (LTFQDVAVDF…ERDSLLDTHP (71 aa)) folds into the KRAB domain. Over residues 99 to 112 (DTHPDGENRPEIKK) the composition is skewed to basic and acidic residues. The C2H2-type 1; degenerate zinc finger occupies 255–280 (HTAEKPSECGKAFSHTSSLSQPQMLL). 5 consecutive C2H2-type zinc fingers follow at residues 286 to 308 (YKCDECGKRFSQRIHLIQHQRIH), 314 to 336 (FICNGCGKAFRQHSSFTQHLRIH), 342 to 364 (YKCNQCGKAFSRITSLTEHHRLH), 370 to 392 (YECGFCGKAFSQRTHLNQHERTH), and 398 to 420 (YKCNECGKAFSQSAHLNQHRKIH).

The protein belongs to the krueppel C2H2-type zinc-finger protein family. Expressed in fetal and adult brain.

The protein resides in the nucleus. Functionally, may be involved in transcriptional regulation. This Homo sapiens (Human) protein is Zinc finger protein 713.